The primary structure comprises 329 residues: Deoxynucleotidyltransferase terminal-interacting protein 1 (329 aa).

2 disordered regions span residues 1–22 (MGATGDAEQPRGPSGAERGGLE) and 147–178 (KRGRQAEEECAHRGSPLPKKRKGRPPGHILSS). Positions 56 to 147 (MTTSFTDPAI…RLTHELPGIK (92 aa)) are important for dimerization. Over residues 147–158 (KRGRQAEEECAH) the composition is skewed to basic and acidic residues. The segment at residues 159-173 (RGSPLPKKRKGRPPG) is a DNA-binding region (a.T hook). At Ser161 the chain carries Phosphoserine. The Nuclear localization signal signature appears at 164–170 (PKKRKGR). The segment at 197–316 (REGPKWDPAR…MRKYMETLRT (120 aa)) is important for DNA and nucleosome binding. The segment at residues 216–237 (GSRANKALGMGGTRGRIYIKHP) is a DNA-binding region (H-T-H motif).

As to quaternary structure, monomer and homodimer. A minor proportion may form homotrimers. Interacts with ZNF541. Interacts with the terminal deoxynucleotidyltransferase DNTT. Interacts with TRERF1. Identified in a histone deacetylase complex that contains DNTTIP1, HDAC1 and MIDEAS; this complex assembles into a tetramer that contains four copies of each protein chain. Component of a histone deacetylase complex containing DNTTIP1, ZNF541, HDAC1 and HDAC2. Identified in a complex with KCTD19, HDAC1, HDAC2 and ZNF541.

It localises to the nucleus. Increases DNTT terminal deoxynucleotidyltransferase activity (in vitro). Also acts as a transcriptional regulator, binding to the consensus sequence 5'-GNTGCATG-3' following an AT-tract. Associates with RAB20 promoter and positively regulates its transcription. Binds DNA and nucleosomes; may recruit HDAC1 complexes to nucleosomes or naked DNA. This is Deoxynucleotidyltransferase terminal-interacting protein 1 (DNTTIP1) from Homo sapiens (Human).